Reading from the N-terminus, the 98-residue chain is HIG1 domain family member 1B (98 aa).

Over 1–28 (MSANKGWWVPPEGEDNLSKKFLRKTRES) the chain is Cytoplasmic. Residues 1–94 (MSANKGWWVP…YRDYIKRVSE (94 aa)) form the HIG1 domain. The chain crosses the membrane as a helical span at residues 29–46 (PLVPIGVAGCLVIAAYRI). Residues 47–60 (YRLKARGSTKLSIH) lie on the Extracellular side of the membrane. A helical transmembrane segment spans residues 61–83 (LIHTRVAAQACAVGAIMLGAMYT). Topologically, residues 84 to 98 (MYRDYIKRVSEDAEK) are cytoplasmic.

The protein resides in the membrane. The chain is HIG1 domain family member 1B (Higd1b) from Mus musculus (Mouse).